Consider the following 89-residue polypeptide: cAMP-regulated phosphoprotein 21 (89 aa).

Residues 1-89 are disordered; sequence MSEPGDLSQT…GGESLQDQTL (89 aa). The residue at position 2 (Ser2) is an N-acetylserine. A phosphoserine mark is found at Ser33 and Ser56.

As to quaternary structure, interacts with CALM1. Phosphorylation at Ser-56 favors interaction with CALM1.

Its subcellular location is the cytoplasm. Its function is as follows. May act as a competitive inhibitor of calmodulin-dependent enzymes such as calcineurin in neurons. This chain is cAMP-regulated phosphoprotein 21 (ARPP21), found in Bos taurus (Bovine).